An 85-amino-acid polypeptide reads, in one-letter code: Large ribosomal subunit protein bL27 (85 aa).

Residues 1 to 21 (MAHKKGASSSRNGRDSNAQRL) form a disordered region. Over residues 7 to 19 (ASSSRNGRDSNAQ) the composition is skewed to polar residues.

This sequence belongs to the bacterial ribosomal protein bL27 family.

This is Large ribosomal subunit protein bL27 from Beutenbergia cavernae (strain ATCC BAA-8 / DSM 12333 / CCUG 43141 / JCM 11478 / NBRC 16432 / NCIMB 13614 / HKI 0122).